Reading from the N-terminus, the 62-residue chain is Photosystem II reaction center protein Z (62 aa).

2 helical membrane-spanning segments follow: residues 8–28 (LVLL…VVLA) and 41–61 (YTGA…NSLV).

It belongs to the PsbZ family. As to quaternary structure, PSII is composed of 1 copy each of membrane proteins PsbA, PsbB, PsbC, PsbD, PsbE, PsbF, PsbH, PsbI, PsbJ, PsbK, PsbL, PsbM, PsbT, PsbX, PsbY, PsbZ, Psb30/Ycf12, at least 3 peripheral proteins of the oxygen-evolving complex and a large number of cofactors. It forms dimeric complexes.

Its subcellular location is the plastid. It is found in the chloroplast thylakoid membrane. Functionally, may control the interaction of photosystem II (PSII) cores with the light-harvesting antenna, regulates electron flow through the 2 photosystem reaction centers. PSII is a light-driven water plastoquinone oxidoreductase, using light energy to abstract electrons from H(2)O, generating a proton gradient subsequently used for ATP formation. The sequence is that of Photosystem II reaction center protein Z from Porphyra purpurea (Red seaweed).